Here is a 251-residue protein sequence, read N- to C-terminus: Triosephosphate isomerase (251 aa).

9 to 11 serves as a coordination point for substrate; the sequence is NWK. H95 acts as the Electrophile in catalysis. E167 (proton acceptor) is an active-site residue. Substrate contacts are provided by residues G173, S212, and 233–234; that span reads GG.

Belongs to the triosephosphate isomerase family. In terms of assembly, homodimer.

Its subcellular location is the cytoplasm. It catalyses the reaction D-glyceraldehyde 3-phosphate = dihydroxyacetone phosphate. Its pathway is carbohydrate biosynthesis; gluconeogenesis. The protein operates within carbohydrate degradation; glycolysis; D-glyceraldehyde 3-phosphate from glycerone phosphate: step 1/1. Involved in the gluconeogenesis. Catalyzes stereospecifically the conversion of dihydroxyacetone phosphate (DHAP) to D-glyceraldehyde-3-phosphate (G3P). This Pseudomonas putida (strain ATCC 700007 / DSM 6899 / JCM 31910 / BCRC 17059 / LMG 24140 / F1) protein is Triosephosphate isomerase.